We begin with the raw amino-acid sequence, 102 residues long: Iron-sulfur cluster assembly protein CyaY (102 aa).

Belongs to the frataxin family.

In terms of biological role, involved in iron-sulfur (Fe-S) cluster assembly. May act as a regulator of Fe-S biogenesis. This chain is Iron-sulfur cluster assembly protein CyaY, found in Pasteurella multocida (strain Pm70).